The following is a 307-amino-acid chain: Elongation factor Ts (307 aa).

Residues 79–82 (TDFV) are involved in Mg(2+) ion dislocation from EF-Tu.

Belongs to the EF-Ts family.

It localises to the cytoplasm. Functionally, associates with the EF-Tu.GDP complex and induces the exchange of GDP to GTP. It remains bound to the aminoacyl-tRNA.EF-Tu.GTP complex up to the GTP hydrolysis stage on the ribosome. The polypeptide is Elongation factor Ts (Bartonella henselae (strain ATCC 49882 / DSM 28221 / CCUG 30454 / Houston 1) (Rochalimaea henselae)).